A 367-amino-acid polypeptide reads, in one-letter code: MAPSGPGSSARRRCRRVLYWIPVVFITLLLGWSYYAYAIQLCIVSMENTGEQVVCLMAYHLLFAMFVWSYWKTIFTLPMNPSKEFHLSYAEKDLLEREPRGEAHQEVLRRAAKDLPIYTRTMSGAIRYCDRCQLIKPDRCHHCSVCDKCILKMDHHCPWVNNCVGFSNYKFFLLFLAYSLLYCLFIAATDLQYFIKFWTNGLPDTQAKFHIMFLFFAAAMFSVSLSSLFGYHCWLVSKNKSTLEAFRSPVFRHGTDKNGFSLGFSKNMRQVFGDEKKYWLLPIFSSLGDGCSFPTCLVNQDPEQASTPAGLNSTAKNLENHQFPAKPLRESQSHLLTDSQSWTESSINPGKCKAGMSNPALTMENET.

Residues 1–16 (MAPSGPGSSARRRCRR) lie on the Cytoplasmic side of the membrane. Residues 17-37 (VLYWIPVVFITLLLGWSYYAY) form a helical membrane-spanning segment. Topologically, residues 38–54 (AIQLCIVSMENTGEQVV) are lumenal. The chain crosses the membrane as a helical span at residues 55 to 75 (CLMAYHLLFAMFVWSYWKTIF). Topologically, residues 76 to 170 (TLPMNPSKEF…NNCVGFSNYK (95 aa)) are cytoplasmic. The region spanning 127–177 (RYCDRCQLIKPDRCHHCSVCDKCILKMDHHCPWVNNCVGFSNYKFFLLFLA) is the DHHC domain. The active-site S-palmitoyl cysteine intermediate is the Cys157. A helical transmembrane segment spans residues 171–191 (FFLLFLAYSLLYCLFIAATDL). Over 192–208 (QYFIKFWTNGLPDTQAK) the chain is Lumenal. Residues 209-229 (FHIMFLFFAAAMFSVSLSSLF) form a helical membrane-spanning segment. The Cytoplasmic portion of the chain corresponds to 230–367 (GYHCWLVSKN…NPALTMENET (138 aa)). Residues 299–367 (NQDPEQASTP…NPALTMENET (69 aa)) form a mediates localization to plasma membrane and recycling endosomes region. A disordered region spans residues 330–367 (ESQSHLLTDSQSWTESSINPGKCKAGMSNPALTMENET). Polar residues predominate over residues 333 to 348 (SHLLTDSQSWTESSIN). The short motif at 335–336 (LL) is the Non-canonical dileucine endocytic signal element. Ser341 carries the post-translational modification Phosphoserine. Residues 358–361 (NPAL) carry the NPxY-like endocytic signal motif.

This sequence belongs to the DHHC palmitoyltransferase family. As to quaternary structure, monomer. Homodimer. The monomeric form has a higher catalytic activity. Post-translationally, autopalmitoylated. In terms of tissue distribution, ubiquitously expressed. Reduced expression in colorectal cancers with liver metastasis.

It localises to the postsynaptic density. The protein resides in the postsynaptic recycling endosome membrane. It is found in the cell membrane. Its subcellular location is the endoplasmic reticulum membrane. The protein localises to the golgi apparatus membrane. It carries out the reaction L-cysteinyl-[protein] + hexadecanoyl-CoA = S-hexadecanoyl-L-cysteinyl-[protein] + CoA. It catalyses the reaction L-cysteinyl-[protein] + tetradecanoyl-CoA = S-tetradecanoyl-L-cysteinyl-[protein] + CoA. The enzyme catalyses L-cysteinyl-[protein] + octadecanoyl-CoA = S-octadecanoyl-L-cysteinyl-[protein] + CoA. Its function is as follows. Palmitoyltransferase that catalyzes the addition of palmitate onto various protein substrates and is involved in a variety of cellular processes. Has no stringent fatty acid selectivity and in addition to palmitate can also transfer onto target proteins myristate from tetradecanoyl-CoA and stearate from octadecanoyl-CoA. In the nervous system, plays a role in long term synaptic potentiation by palmitoylating AKAP5 through which it regulates protein trafficking from the dendritic recycling endosomes to the plasma membrane and controls both structural and functional plasticity at excitatory synapses. In dendrites, mediates the palmitoylation of DLG4 when synaptic activity decreases and induces synaptic clustering of DLG4 and associated AMPA-type glutamate receptors. Also mediates the de novo and turnover palmitoylation of RGS7BP, a shuttle for Gi/o-specific GTPase-activating proteins/GAPs, promoting its localization to the plasma membrane in response to the activation of G protein-coupled receptors. Through the localization of these GTPase-activating proteins/GAPs, it also probably plays a role in G protein-coupled receptors signaling in neurons. Also probably plays a role in cell adhesion by palmitoylating CD9 and CD151 to regulate their expression and function. Palmitoylates the endoplasmic reticulum protein CKAP4 and regulates its localization to the plasma membrane. Could also palmitoylate LCK and regulate its localization to the plasma membrane. In terms of biological role, (Microbial infection) Promotes Chikungunya virus (CHIKV) replication by mediating viral nsp1 palmitoylation. The sequence is that of Palmitoyltransferase ZDHHC2 from Homo sapiens (Human).